The primary structure comprises 444 residues: Glutamyl-tRNA reductase (444 aa).

Residues 49 to 52, Ser109, 114 to 116, and Gln120 contribute to the substrate site; these read TCNR and ETQ. Cys50 acts as the Nucleophile in catalysis. 189–194 contacts NADP(+); it reads GAGKMG.

The protein belongs to the glutamyl-tRNA reductase family. As to quaternary structure, homodimer.

It carries out the reaction (S)-4-amino-5-oxopentanoate + tRNA(Glu) + NADP(+) = L-glutamyl-tRNA(Glu) + NADPH + H(+). It participates in porphyrin-containing compound metabolism; protoporphyrin-IX biosynthesis; 5-aminolevulinate from L-glutamyl-tRNA(Glu): step 1/2. Functionally, catalyzes the NADPH-dependent reduction of glutamyl-tRNA(Glu) to glutamate 1-semialdehyde (GSA). This is Glutamyl-tRNA reductase from Bacillus cereus (strain ATCC 10987 / NRS 248).